The primary structure comprises 273 residues: Tyrosinase (273 aa).

6 residues coordinate Cu cation: H37, H53, H62, H189, H193, and H215.

The protein belongs to the tyrosinase family. Cu(2+) serves as cofactor.

It carries out the reaction 2 L-dopa + O2 = 2 L-dopaquinone + 2 H2O. The catalysed reaction is L-tyrosine + O2 = L-dopaquinone + H2O. This is a copper-containing oxidase that functions in the formation of pigments such as melanins and other polyphenolic compounds. The chain is Tyrosinase (melC2) from Streptomyces lincolnensis.